The following is a 329-amino-acid chain: MQGFVEDFLKPRLVDIQQISATHAKITLEPLERGFGHTLGNALRRILLSSISGCAVTEVEIDGILHEYMHKEGVKEDILDILLNLKGLSIKLFGKDEVTLYLKKSGIGPVLAKDINHDNSTEIINNKHIICNLTCSDASIDIRMKVTRGRGYITAKSRKENYDNEHIIGKLFLDVTYSPIERIMYTVESARVEQRTDLDKLIIEMETNGTIDPEDAIRKAATILAQQLEAFVDLRGVREPEIKEEKPEFEPVLLRPVDDLELTVRSANCLKAESIHYIGDLVQKTEVELLKTPNLGKKSLTEIKDVLASRGLSLGMKLDNWPPKSLLED.

The segment at 1–235 is alpha N-terminal domain (alpha-NTD); it reads MQGFVEDFLK…QQLEAFVDLR (235 aa). Residues 249–329 form an alpha C-terminal domain (alpha-CTD) region; sequence FEPVLLRPVD…NWPPKSLLED (81 aa).

It belongs to the RNA polymerase alpha chain family. Homodimer. The RNAP catalytic core consists of 2 alpha, 1 beta, 1 beta' and 1 omega subunit. When a sigma factor is associated with the core the holoenzyme is formed, which can initiate transcription.

It carries out the reaction RNA(n) + a ribonucleoside 5'-triphosphate = RNA(n+1) + diphosphate. DNA-dependent RNA polymerase catalyzes the transcription of DNA into RNA using the four ribonucleoside triphosphates as substrates. In Buchnera aphidicola subsp. Cinara cedri (strain Cc), this protein is DNA-directed RNA polymerase subunit alpha.